The chain runs to 472 residues: MGENIGKITQVMGPVVDVEFEQGNLPNILTALLITNPTINDEADNLVVEVAQHLGDNVVRTIAMDVTDGLVRGMPVKDTGDPIMMPVGEAVLGRVLNVVGRPVDGLGPVSQEKMLPIHRLAPKFTEQDTTVRVLETGVKVIDLLVPFPRGGKMGMFGGAGVGKTVIMMEMVHNIAMQHGGISVFAGVGERTREGNDLYHEMKEGGVLPKASLVYGQMTEPPGARARVALSALTSAEYFRDQEGQDVLIFIDNIFRFTQAGSEVSALLGRMPSAVGYQPTLAVDLGELQERITSTDKGSITAVQCVYVPADDLTDPAPATTFAHLDGTVVLSRQIVELGIYPAVDPLDSSSRILDPGYLGDEHYGVARTVQQMLQKYKELQDIIAILGMDELSDEDKITVARARKIQRFLSQPFFVAENFTGKPGKYVKLEDTVRGFKEIVDGKHDDLPERAFYMVGGIEEAIENAKAMAEAA.

Residue 157–164 (GGAGVGKT) participates in ATP binding.

This sequence belongs to the ATPase alpha/beta chains family. F-type ATPases have 2 components, CF(1) - the catalytic core - and CF(0) - the membrane proton channel. CF(1) has five subunits: alpha(3), beta(3), gamma(1), delta(1), epsilon(1). CF(0) has three main subunits: a(1), b(2) and c(9-12). The alpha and beta chains form an alternating ring which encloses part of the gamma chain. CF(1) is attached to CF(0) by a central stalk formed by the gamma and epsilon chains, while a peripheral stalk is formed by the delta and b chains.

Its subcellular location is the cell inner membrane. It catalyses the reaction ATP + H2O + 4 H(+)(in) = ADP + phosphate + 5 H(+)(out). Produces ATP from ADP in the presence of a proton gradient across the membrane. The catalytic sites are hosted primarily by the beta subunits. This is ATP synthase subunit beta from Desulfatibacillum aliphaticivorans.